A 385-amino-acid polypeptide reads, in one-letter code: Uroporphyrinogen decarboxylase (385 aa).

Residues 53-57, aspartate 102, tyrosine 179, serine 234, and histidine 363 each bind substrate; that span reads RQAGR.

Belongs to the uroporphyrinogen decarboxylase family. As to quaternary structure, homodimer.

The protein localises to the cytoplasm. The enzyme catalyses uroporphyrinogen III + 4 H(+) = coproporphyrinogen III + 4 CO2. The protein operates within porphyrin-containing compound metabolism; protoporphyrin-IX biosynthesis; coproporphyrinogen-III from 5-aminolevulinate: step 4/4. Catalyzes the decarboxylation of four acetate groups of uroporphyrinogen-III to yield coproporphyrinogen-III. This is Uroporphyrinogen decarboxylase from Tropheryma whipplei (strain TW08/27) (Whipple's bacillus).